A 277-amino-acid chain; its full sequence is 2-dehydro-3-deoxyphosphooctonate aldolase (277 aa).

Belongs to the KdsA family.

The protein localises to the cytoplasm. It catalyses the reaction D-arabinose 5-phosphate + phosphoenolpyruvate + H2O = 3-deoxy-alpha-D-manno-2-octulosonate-8-phosphate + phosphate. The protein operates within carbohydrate biosynthesis; 3-deoxy-D-manno-octulosonate biosynthesis; 3-deoxy-D-manno-octulosonate from D-ribulose 5-phosphate: step 2/3. Its pathway is bacterial outer membrane biogenesis; lipopolysaccharide biosynthesis. In Syntrophotalea carbinolica (strain DSM 2380 / NBRC 103641 / GraBd1) (Pelobacter carbinolicus), this protein is 2-dehydro-3-deoxyphosphooctonate aldolase.